The following is a 121-amino-acid chain: Large ribosomal subunit protein bL20 (121 aa).

This sequence belongs to the bacterial ribosomal protein bL20 family.

Its function is as follows. Binds directly to 23S ribosomal RNA and is necessary for the in vitro assembly process of the 50S ribosomal subunit. It is not involved in the protein synthesizing functions of that subunit. In Methylorubrum populi (strain ATCC BAA-705 / NCIMB 13946 / BJ001) (Methylobacterium populi), this protein is Large ribosomal subunit protein bL20.